The following is a 400-amino-acid chain: CCA-adding enzyme (400 aa).

Glycine 28 and arginine 31 together coordinate ATP. The CTP site is built by glycine 28 and arginine 31. Residues aspartate 41 and aspartate 43 each coordinate Mg(2+). The ATP site is built by arginine 112, aspartate 155, arginine 158, arginine 161, and arginine 164. The CTP site is built by arginine 112, aspartate 155, arginine 158, arginine 161, and arginine 164.

It belongs to the tRNA nucleotidyltransferase/poly(A) polymerase family. Bacterial CCA-adding enzyme type 3 subfamily. Homodimer. Requires Mg(2+) as cofactor.

It carries out the reaction a tRNA precursor + 2 CTP + ATP = a tRNA with a 3' CCA end + 3 diphosphate. The catalysed reaction is a tRNA with a 3' CCA end + 2 CTP + ATP = a tRNA with a 3' CCACCA end + 3 diphosphate. In terms of biological role, catalyzes the addition and repair of the essential 3'-terminal CCA sequence in tRNAs without using a nucleic acid template. Adds these three nucleotides in the order of C, C, and A to the tRNA nucleotide-73, using CTP and ATP as substrates and producing inorganic pyrophosphate. tRNA 3'-terminal CCA addition is required both for tRNA processing and repair. Also involved in tRNA surveillance by mediating tandem CCA addition to generate a CCACCA at the 3' terminus of unstable tRNAs. While stable tRNAs receive only 3'-terminal CCA, unstable tRNAs are marked with CCACCA and rapidly degraded. This is CCA-adding enzyme from Oceanobacillus iheyensis (strain DSM 14371 / CIP 107618 / JCM 11309 / KCTC 3954 / HTE831).